The following is a 101-amino-acid chain: Small ribosomal subunit protein uS10 (101 aa).

Belongs to the universal ribosomal protein uS10 family. As to quaternary structure, part of the 30S ribosomal subunit.

Its function is as follows. Involved in the binding of tRNA to the ribosomes. The polypeptide is Small ribosomal subunit protein uS10 (Corynebacterium jeikeium (strain K411)).